Reading from the N-terminus, the 163-residue chain is Large ribosomal subunit protein uL15 (163 aa).

Residues Met-1–Gly-29 are compositionally biased toward basic residues. 2 disordered regions span residues Met-1 to Arg-59 and Val-135 to Ser-163. Basic and acidic residues-rich tracts occupy residues Ala-33–Leu-46 and Leu-142–Asp-154.

Belongs to the universal ribosomal protein uL15 family. In terms of assembly, part of the 50S ribosomal subunit.

Functionally, binds to the 23S rRNA. This chain is Large ribosomal subunit protein uL15, found in Natronomonas pharaonis (strain ATCC 35678 / DSM 2160 / CIP 103997 / JCM 8858 / NBRC 14720 / NCIMB 2260 / Gabara) (Halobacterium pharaonis).